The following is a 307-amino-acid chain: Heme A synthase (307 aa).

Residues 1–8 are Cytoplasmic-facing; it reads MQHNRYLK. Residues 9–29 traverse the membrane as a helical segment; the sequence is WFAVAATVGMLLILLGGALVT. The Extracellular segment spans residues 30 to 56; it reads KTDSGLGCGRNWPDCNGSLIPKEITPE. A disulfide bond links Cys-37 and Cys-44. A helical membrane pass occupies residues 57-77; it reads VLIEFSHRLVTGVVSISILVL. Glu-60 is an active-site residue. Residue His-63 coordinates heme o. Residues 78 to 92 are Cytoplasmic-facing; that stretch reads TVWTWRKLGHIREVK. A helical membrane pass occupies residues 93–113; it reads LLGFLAMFFLIAQALIGAAQV. The Extracellular segment spans residues 114-123; the sequence is LWGQGDFILA. The helical transmembrane segment at 124-144 threads the bilayer; it reads LHFGISLISFAAVLLLSMIVF. His-125 provides a ligand contact to heme o. At 145–161 the chain is on the cytoplasmic side; the sequence is EVDRKFDADNVFIGKKL. The helical transmembrane segment at 162 to 182 threads the bilayer; that stretch reads RWHTIAVTIYSYLVVYTGALV. The Extracellular segment spans residues 183–218; the sequence is RHTDSSLICPDWPFCYNETPLASPNNMYEWVQMGHR. A disulfide bridge links Cys-191 with Cys-197. His-217 is a heme b binding site. Residues 219-239 form a helical membrane-spanning segment; it reads LAVLIIFIWIAYITWHAVKEY. Residues 240 to 247 lie on the Cytoplasmic side of the membrane; that stretch reads KNQRVVYY. A helical transmembrane segment spans residues 248–268; it reads GWIIAFTIVFLQVIAGMLVVL. At 269–276 the chain is on the extracellular side; that stretch reads TKLNLTVA. A helical membrane pass occupies residues 277–297; that stretch reads LMHSLLISLLFGLLCYMIMLV. His-279 is a binding site for heme b. The Cytoplasmic segment spans residues 298–307; it reads ARSNYNEKMK.

Belongs to the COX15/CtaA family. Type 1 subfamily. In terms of assembly, interacts with CtaB. Requires heme b as cofactor.

Its subcellular location is the cell membrane. It carries out the reaction Fe(II)-heme o + 2 A + H2O = Fe(II)-heme a + 2 AH2. The protein operates within porphyrin-containing compound metabolism; heme A biosynthesis; heme A from heme O: step 1/1. Catalyzes the conversion of heme O to heme A by two successive hydroxylations of the methyl group at C8. The first hydroxylation forms heme I, the second hydroxylation results in an unstable dihydroxymethyl group, which spontaneously dehydrates, resulting in the formyl group of heme A. In Lysinibacillus sphaericus (strain C3-41), this protein is Heme A synthase.